The chain runs to 493 residues: Gamma-aminobutyric acid receptor subunit alpha-3 (493 aa).

A signal peptide spans 1 to 28; that stretch reads MITTQMWHFYVTRVGLLLLISILPGTTG. The segment at 27–54 is disordered; it reads TGQGESRRQEPGDFVKQDIGGLSPKHAP. At 29 to 276 the chain is on the extracellular side; it reads QGESRRQEPG…THFHLKRKIG (248 aa). The segment covering 31-42 has biased composition (basic and acidic residues); that stretch reads ESRRQEPGDFVK. An N-linked (GlcNAc...) asparagine glycan is attached at N63. R119 serves as a coordination point for 4-aminobutanoate. N-linked (GlcNAc...) asparagine glycans are attached at residues N163 and N176. T182 is a 4-aminobutanoate binding site. A disulfide bridge connects residues C191 and C205. An N-linked (GlcNAc...) asparagine glycan is attached at N228. 3 helical membrane-spanning segments follow: residues 277 to 298, 304 to 325, and 338 to 359; these read YFVI…VSFW, VPAR…SISA, and MDWF…FATV. The Cytoplasmic portion of the chain corresponds to 360–458; sequence NYFTKRSWAW…TYNSVSKVDK (99 aa). S427 bears the Phosphoserine mark. Position 428 is a phosphothreonine (T428). Residues S434 and S443 each carry the phosphoserine modification. A helical membrane pass occupies residues 459–480; it reads ISRIIFPVLFAIFNLVYWATYV.

The protein belongs to the ligand-gated ion channel (TC 1.A.9) family. Gamma-aminobutyric acid receptor (TC 1.A.9.5) subfamily. GABRA3 sub-subfamily. Heteropentamer, formed by a combination of alpha (GABRA1-6), beta (GABRB1-3), gamma (GABRG1-3), delta (GABRD), epsilon (GABRE), rho (GABRR1-3), pi (GABRP) and theta (GABRQ) chains, each subunit exhibiting distinct physiological and pharmacological properties. Binds UBQLN1. Interacts with GPHN. In terms of tissue distribution, expressed in most brain regions. Expressed in lungs, in alveolar epithelium.

The protein localises to the postsynaptic cell membrane. Its subcellular location is the cell membrane. The catalysed reaction is chloride(in) = chloride(out). Functionally, alpha subunit of the heteropentameric ligand-gated chloride channel gated by gamma-aminobutyric acid (GABA), a major inhibitory neurotransmitter in the brain. GABA-gated chloride channels, also named GABA(A) receptors (GABAAR), consist of five subunits arranged around a central pore and contain GABA active binding site(s) located at the alpha and beta subunit interface(s). When activated by GABA, GABAARs selectively allow the flow of chloride anions across the cell membrane down their electrochemical gradient. Chloride influx into the postsynaptic neuron following GABAAR opening decreases the neuron ability to generate a new action potential, thereby reducing nerve transmission. The polypeptide is Gamma-aminobutyric acid receptor subunit alpha-3 (Rattus norvegicus (Rat)).